The sequence spans 157 residues: uncharacterized protein (157 aa).

Positions 9 to 146 (LLINYKTLDE…GDFYVWHPET (138 aa)) constitute an N-acetyltransferase domain.

This is an uncharacterized protein from Bacillus anthracis (strain CDC 684 / NRRL 3495).